A 166-amino-acid chain; its full sequence is Lactose-binding lectin l-2 (166 aa).

Residues 1–24 (MVSFKLPAFLCVAVLSSMALVSHG) form the signal peptide. 3 disulfides stabilise this stretch: C34–C45, C62–C160, and C136–C152. Residues 41-161 (HKNRCYLHVA…CDLLFPSICV (121 aa)) enclose the C-type lectin domain.

In terms of assembly, homodimer; disulfide-linked. Skin; contained within club cells which are a component of the epidermis in combination with epithelial cells and mucus cells (at protein level).

Its subcellular location is the secreted. Involved in host defense at the body surface. Causes agglutination and suppresses the growth of the Gram-negative bacterium E.coli K12. Possesses calcium-independent hemagglutinating activity. This is Lactose-binding lectin l-2 from Anguilla japonica (Japanese eel).